A 185-amino-acid chain; its full sequence is Ribonuclease HII (185 aa).

Residues 1 to 185 (MIILGIDEAG…KSYKPIQLLL (185 aa)) enclose the RNase H type-2 domain. Residues aspartate 7, glutamate 8, and aspartate 99 each contribute to the a divalent metal cation site.

It belongs to the RNase HII family. It depends on Mn(2+) as a cofactor. Requires Mg(2+) as cofactor.

The protein localises to the cytoplasm. The enzyme catalyses Endonucleolytic cleavage to 5'-phosphomonoester.. Its function is as follows. Endonuclease that specifically degrades the RNA of RNA-DNA hybrids. This chain is Ribonuclease HII, found in Francisella philomiragia subsp. philomiragia (strain ATCC 25017 / CCUG 19701 / FSC 153 / O#319-036).